Here is a 497-residue protein sequence, read N- to C-terminus: Subtilisin-like protease CPC735_031240 (497 aa).

Residues 1-16 (MKGVLSLSLLPLLAAP) form the signal peptide. A propeptide spanning residues 17 to 136 (SPILVDTIHR…IEKDSEVHAW (120 aa)) is cleaved from the precursor. In terms of domain architecture, Inhibitor I9 spans 43–134 (SYIVVFKKNV…QYIEKDSEVH (92 aa)). A Peptidase S8 domain is found at 146–452 (PWGLARVSHR…GGSSNYTAII (307 aa)). Active-site charge relay system residues include aspartate 182 and histidine 214. 2 N-linked (GlcNAc...) asparagine glycosylation sites follow: asparagine 244 and asparagine 284. Catalysis depends on serine 380, which acts as the Charge relay system. Asparagine 447 is a glycosylation site (N-linked (GlcNAc...) asparagine).

It belongs to the peptidase S8 family.

It is found in the secreted. In terms of biological role, secreted subtilisin-like serine protease with keratinolytic activity that contributes to pathogenicity. In Coccidioides posadasii (strain C735) (Valley fever fungus), this protein is Subtilisin-like protease CPC735_031240.